Reading from the N-terminus, the 55-residue chain is uncharacterized protein (55 aa).

The segment at 1-22 is disordered; it reads MPALKSHVRPNSAAPARRQPWP.

This is an uncharacterized protein from Rhodobacter capsulatus (Rhodopseudomonas capsulata).